Here is a 186-residue protein sequence, read N- to C-terminus: Peptidyl-tRNA hydrolase (186 aa).

Residue tyrosine 14 coordinates tRNA. Histidine 19 acts as the Proton acceptor in catalysis. Residues tyrosine 64, asparagine 66, and asparagine 112 each contribute to the tRNA site.

Belongs to the PTH family. As to quaternary structure, monomer.

The protein localises to the cytoplasm. The catalysed reaction is an N-acyl-L-alpha-aminoacyl-tRNA + H2O = an N-acyl-L-amino acid + a tRNA + H(+). Hydrolyzes ribosome-free peptidyl-tRNAs (with 1 or more amino acids incorporated), which drop off the ribosome during protein synthesis, or as a result of ribosome stalling. Its function is as follows. Catalyzes the release of premature peptidyl moieties from peptidyl-tRNA molecules trapped in stalled 50S ribosomal subunits, and thus maintains levels of free tRNAs and 50S ribosomes. This chain is Peptidyl-tRNA hydrolase, found in Geobacillus thermodenitrificans (strain NG80-2).